A 371-amino-acid polypeptide reads, in one-letter code: GDP-mannose transporter (371 aa).

The Cytoplasmic portion of the chain corresponds to 1–51 (MGVISFYLIGQLLYLIRKKYTTTYRQQQQHQYNMDSKHSTSSSSSGSLATR). A helical membrane pass occupies residues 52–72 (ISNSGPISIAAYCLSSILMTV). The Lumenal segment spans residues 73-80 (TNKYVLSG). The chain crosses the membrane as a helical span at residues 81–101 (FSFNLNFFLLAVQSIVCIVTI). The Cytoplasmic segment spans residues 102 to 121 (GSLKSLNIITYRQFNKDEAK). The helical transmembrane segment at 122–138 (KWSPIAFLLVAMIYTSS) threads the bilayer. Topologically, residues 139–145 (KALQYLS) are lumenal. The helical transmembrane segment at 146-162 (IPVYTIFKNLTIILIAY) threads the bilayer. The Cytoplasmic segment spans residues 163–171 (GEVIWFGGK). Residues 172–192 (VTTMALSSFLLMVLSSVIAYY) traverse the membrane as a helical segment. At 193–206 (GDNAAVKSHDDAFA) the chain is on the lumenal side. A helical membrane pass occupies residues 207 to 227 (LYLGYFWMLTNCFASAAFVLI). The Cytoplasmic portion of the chain corresponds to 228-241 (MRKRIKLTNFKDFD). A helical membrane pass occupies residues 242 to 262 (TMYYNNLLSIPILLICSFIFE). Over 263 to 281 (DWSSANVSLNFPADNRVTT) the chain is Lumenal. Asn-268 is a glycosylation site (N-linked (GlcNAc...) asparagine). The chain crosses the membrane as a helical span at residues 282–302 (ITAMILSGASSVGISYCSAWC). Residues 303-309 (VRVTSST) are Cytoplasmic-facing. The helical transmembrane segment at 310–329 (TYSMVGALNKLPIALSGLIF) threads the bilayer. Residues 330 to 332 (FEA) are Lumenal-facing. A helical membrane pass occupies residues 333 to 355 (AVNFWSVSSIFVGFGAGLVYAVA). Residues 356–371 (KQKQQKEQSQQLPTTK) lie on the Cytoplasmic side of the membrane.

The protein belongs to the TPT transporter family. SLC35D subfamily. Homooligomer.

It localises to the golgi apparatus membrane. It is found in the cytoplasmic vesicle membrane. Its subcellular location is the endoplasmic reticulum membrane. Functionally, involved in the import of GDP-mannose from the cytoplasm into the Golgi lumen. Involved in hyphal formation. This is GDP-mannose transporter (VRG4) from Candida albicans (strain SC5314 / ATCC MYA-2876) (Yeast).